We begin with the raw amino-acid sequence, 225 residues long: Membrin-11 (225 aa).

Ala2 carries the post-translational modification N-acetylalanine. Residues 2–200 (ASGIVEGGGS…VLRLIERRNR (199 aa)) lie on the Cytoplasmic side of the membrane. The chain crosses the membrane as a helical; Anchor for type IV membrane protein span at residues 201 to 221 (VDTWIKYAGMIATLVILYLFI). Residues 222 to 225 (RWTR) are Vesicular-facing.

This sequence belongs to the GOSR2 family.

It is found in the golgi apparatus membrane. Involved in transport of proteins from the cis/medial-Golgi to the trans-Golgi network. This Arabidopsis thaliana (Mouse-ear cress) protein is Membrin-11 (MEMB11).